The following is a 312-amino-acid chain: Ribosomal protein L11 methyltransferase (312 aa).

The S-adenosyl-L-methionine site is built by T163, G184, D206, and N248.

This sequence belongs to the methyltransferase superfamily. PrmA family.

It is found in the cytoplasm. It catalyses the reaction L-lysyl-[protein] + 3 S-adenosyl-L-methionine = N(6),N(6),N(6)-trimethyl-L-lysyl-[protein] + 3 S-adenosyl-L-homocysteine + 3 H(+). Functionally, methylates ribosomal protein L11. This is Ribosomal protein L11 methyltransferase from Clostridium botulinum (strain 657 / Type Ba4).